The chain runs to 491 residues: Myocilin (491 aa).

Positions 1 to 18 are cleaved as a signal peptide; sequence MPAVQLLLLACPVWDVGA. Asn43 is a glycosylation site (N-linked (GlcNAc...) asparagine). The stretch at 98–171 forms a coiled coil; it reads QETPEGLQRE…QEVARLRRGQ (74 aa). The segment at 151–189 is disordered; that stretch reads ENLARRLESSSQEVARLRRGQCPQTRDTARDVPPGSREV. An Olfactomedin-like domain is found at 231–490; sequence GCGELVWVGE…MVTYDIKLSK (260 aa). A disulfide bridge connects residues Cys232 and Cys420. Residues Asp367, Asn415, Ala416, Ile464, and Asp465 each coordinate Ca(2+).

In terms of assembly, homodimer (via N-terminus). Can also form higher oligomers. Interacts with OLFM3, FN1, NRCAM, GLDN and NFASC. Interacts (via N-terminus) with MYL2. Interacts with SFRP1, FRZB, FZD7, FZD10, FZD1 and WIF1; regulates Wnt signaling. Interacts with SNTA1; regulates muscle hypertrophy. Interacts with ERBB2 and ERBB3; activates ERBB2-ERBB3 signaling pathway. Interacts with SNCG; affects its secretion and its aggregation. Post-translationally, palmitoylated. Undergoes a calcium-dependent proteolytic cleavage at Arg-213 by CAPN2 in the endoplasmic reticulum. The result is the production of two fragments, one of 35 kDa containing the C-terminal olfactomedin-like domain, and another of 20 kDa containing the N-terminal leucine zipper-like domain. In terms of processing, glycosylated.

It is found in the secreted. Its subcellular location is the golgi apparatus. It localises to the cytoplasmic vesicle. The protein resides in the extracellular space. The protein localises to the extracellular matrix. It is found in the extracellular exosome. Its subcellular location is the mitochondrion. It localises to the mitochondrion intermembrane space. The protein resides in the mitochondrion inner membrane. The protein localises to the mitochondrion outer membrane. It is found in the rough endoplasmic reticulum. Its subcellular location is the cell projection. It localises to the cilium. The protein resides in the endoplasmic reticulum. Functionally, secreted glycoprotein regulating the activation of different signaling pathways in adjacent cells to control different processes including cell adhesion, cell-matrix adhesion, cytoskeleton organization and cell migration. Promotes substrate adhesion, spreading and formation of focal contacts. Negatively regulates cell-matrix adhesion and stress fiber assembly through Rho protein signal transduction. Modulates the organization of actin cytoskeleton by stimulating the formation of stress fibers through interactions with components of Wnt signaling pathways. Promotes cell migration through activation of PTK2 and the downstream phosphatidylinositol 3-kinase signaling. Plays a role in bone formation and promotes osteoblast differentiation in a dose-dependent manner through mitogen-activated protein kinase signaling. Mediates myelination in the peripheral nervous system through ERBB2/ERBB3 signaling. Plays a role as a regulator of muscle hypertrophy through the components of dystrophin-associated protein complex. Involved in positive regulation of mitochondrial depolarization. Plays a role in neurite outgrowth. May participate in the obstruction of fluid outflow in the trabecular meshwork. The sequence is that of Myocilin (MYOC) from Macaca fascicularis (Crab-eating macaque).